The following is a 315-amino-acid chain: Histone-lysine N-methyltransferase SETMAR (315 aa).

The Pre-SET domain occupies 74 to 137 (PGCACIKTPC…HCRNRVVQSG (64 aa)). Residues cysteine 76, cysteine 78, cysteine 83, cysteine 88, cysteine 90, cysteine 119, cysteine 123, cysteine 125, and cysteine 129 each contribute to the Zn(2+) site. The 125-residue stretch at 140–264 (FLLQVFQTEK…PGEELSYDYS (125 aa)) folds into the SET domain. S-adenosyl-L-methionine contacts are provided by residues 150-152 (KGW), tyrosine 193, arginine 221, and 224-225 (NH). The Zn(2+) site is built by cysteine 227, cysteine 288, cysteine 290, and cysteine 295. Residues 284 to 300 (PRKPCYCGAQSCATFLP) form the Post-SET domain.

It belongs to the class V-like SAM-binding methyltransferase superfamily.

It localises to the nucleus. The protein resides in the chromosome. The enzyme catalyses L-lysyl(36)-[histone H3] + 2 S-adenosyl-L-methionine = N(6),N(6)-dimethyl-L-lysyl(36)-[histone H3] + 2 S-adenosyl-L-homocysteine + 2 H(+). In terms of biological role, histone methyltransferase that methylates 'Lys-4' and 'Lys-36' of histone H3, 2 specific tags for epigenetic transcriptional activation. Specifically mediates dimethylation of H3 'Lys-36'. The chain is Histone-lysine N-methyltransferase SETMAR from Rattus norvegicus (Rat).